The following is a 205-amino-acid chain: Holliday junction branch migration complex subunit RuvA (205 aa).

The interval 1 to 64 (MIGRLNGILV…EDAQLLFGFN (64 aa)) is domain I. The domain II stretch occupies residues 65 to 143 (NKVERALFRE…NWGNDLFTPF (79 aa)). Positions 144–156 (SDSAVIEPFSDAT) are flexible linker. Residues 157–205 (IANNAADDAVSALVSLGYKLPQAQKAVKSVSKPDMSTEVLIKESLKSML) form a domain III region.

It belongs to the RuvA family. In terms of assembly, homotetramer. Forms an RuvA(8)-RuvB(12)-Holliday junction (HJ) complex. HJ DNA is sandwiched between 2 RuvA tetramers; dsDNA enters through RuvA and exits via RuvB. An RuvB hexamer assembles on each DNA strand where it exits the tetramer. Each RuvB hexamer is contacted by two RuvA subunits (via domain III) on 2 adjacent RuvB subunits; this complex drives branch migration. In the full resolvosome a probable DNA-RuvA(4)-RuvB(12)-RuvC(2) complex forms which resolves the HJ.

The protein resides in the cytoplasm. The RuvA-RuvB-RuvC complex processes Holliday junction (HJ) DNA during genetic recombination and DNA repair, while the RuvA-RuvB complex plays an important role in the rescue of blocked DNA replication forks via replication fork reversal (RFR). RuvA specifically binds to HJ cruciform DNA, conferring on it an open structure. The RuvB hexamer acts as an ATP-dependent pump, pulling dsDNA into and through the RuvAB complex. HJ branch migration allows RuvC to scan DNA until it finds its consensus sequence, where it cleaves and resolves the cruciform DNA. The chain is Holliday junction branch migration complex subunit RuvA from Pseudoalteromonas translucida (strain TAC 125).